The following is a 299-amino-acid chain: Acetylglutamate kinase (299 aa).

Substrate is bound by residues 68-69 (GG), Arg-90, and Asn-194.

It belongs to the acetylglutamate kinase family. ArgB subfamily.

It localises to the cytoplasm. The catalysed reaction is N-acetyl-L-glutamate + ATP = N-acetyl-L-glutamyl 5-phosphate + ADP. It participates in amino-acid biosynthesis; L-arginine biosynthesis; N(2)-acetyl-L-ornithine from L-glutamate: step 2/4. Catalyzes the ATP-dependent phosphorylation of N-acetyl-L-glutamate. The protein is Acetylglutamate kinase of Psychrobacter cryohalolentis (strain ATCC BAA-1226 / DSM 17306 / VKM B-2378 / K5).